The primary structure comprises 352 residues: Putative GATA transcription factor 22 (352 aa).

The tract at residues S27 to L53 is disordered. The segment covering Q33–L53 has biased composition (low complexity). The Nuclear localization signal signature appears at P112–K119. The segment at A163–Q189 is disordered. Polar residues predominate over residues I165–Q189. The segment at D195 to V249 adopts a GATA-type zinc-finger fold.

Belongs to the type IV zinc-finger family. Class B subfamily. In terms of assembly, forms heterodimers with GATA18. Expressed predominantly in leaves, and barely in stems, flowers and siliques.

The protein resides in the nucleus. Its function is as follows. Transcriptional regulator that specifically binds 5'-GATA-3' or 5'-GAT-3' motifs within gene promoters. Involved in the modulation of chloroplast development, growth and division in a cytokinin-dependent manner. Repressor of the gibberellic acid (GA) signaling pathway that regulates flowering and modulates greening, in a SOC1-dependent manner. Prevents the accumulation of SOC1 during flowering. Promotes chlorophyll biosynthesis throughout the plant, by regulating chlorophyll biosynthetic genes (e.g. HEMA1 and GUN4) and chloroplast localized glutamate synthase (e.g. GLU1). Involved in the regulation of sugar-sensing genes (e.g. HXK1, HXK2, STP13 and PLT6). Regulator of germination, senescence, elongation growth and flowering time. Influences also leaf starch content. The chain is Putative GATA transcription factor 22 from Arabidopsis thaliana (Mouse-ear cress).